A 334-amino-acid chain; its full sequence is D-fructose 1,6-bisphosphatase class 2/sedoheptulose 1,7-bisphosphatase (334 aa).

Mn(2+) contacts are provided by Asp33, Glu57, Asp85, and Glu88. Residues 88 to 90 (EGT), Tyr119, 164 to 166 (RAR), and 186 to 188 (DGD) contribute to the substrate site. Glu213 provides a ligand contact to Mn(2+).

This sequence belongs to the FBPase class 2 family. As to quaternary structure, homotetramer. Mn(2+) serves as cofactor.

It catalyses the reaction beta-D-fructose 1,6-bisphosphate + H2O = beta-D-fructose 6-phosphate + phosphate. The catalysed reaction is D-sedoheptulose 1,7-bisphosphate + H2O = D-sedoheptulose 7-phosphate + phosphate. It functions in the pathway carbohydrate biosynthesis; Calvin cycle. Its function is as follows. Catalyzes the hydrolysis of fructose 1,6-bisphosphate (Fru 1,6-P2) and sedoheptulose 1,7-bisphosphate (Sed 1,7-P2) to fructose 6-phosphate and sedoheptulose 7-phosphate, respectively. The sequence is that of D-fructose 1,6-bisphosphatase class 2/sedoheptulose 1,7-bisphosphatase from Synechococcus sp. (strain RCC307).